We begin with the raw amino-acid sequence, 340 residues long: Cysteinyl leukotriene receptor 1 (340 aa).

Over 1–31 (MDETGNPTIPPASNNTCYDSIDDFRNQVYST) the chain is Extracellular. Asparagine 14 is a glycosylation site (N-linked (GlcNAc...) asparagine). Residues 32-52 (LYSMISVVGFFGNGFVLYVLV) form a helical membrane-spanning segment. Topologically, residues 53–60 (KTYHEKSA) are cytoplasmic. The helical transmembrane segment at 61–81 (FQVYMINLAVADLLCVCTLPL) threads the bilayer. At 82-109 (RVAYYVHKGIWLFGDFLCRLSTYALYVN) the chain is on the extracellular side. Cysteine 99 and cysteine 176 are disulfide-bonded. Residues 110 to 130 (LYCSIFFMTAMSFFRCVAIVF) traverse the membrane as a helical segment. At 131–144 (PVQNISLVTQKKAR) the chain is on the cytoplasmic side. Residues 145-165 (LVCIAIWMFVILTSSPFLMAN) form a helical membrane-spanning segment. At 166–196 (TYKDEKNNTKCFEPPQDNQAKNYVLILHYVS) the chain is on the extracellular side. A glycan (N-linked (GlcNAc...) asparagine) is linked at asparagine 172. A helical transmembrane segment spans residues 197–217 (LFIGFIIPFITIIVCYTMIIF). At 218–233 (TLLKSSMKKNLSSRKR) the chain is on the cytoplasmic side. A helical membrane pass occupies residues 234-254 (AIGMIIVVTAAFLVSFMPYHI). Residues 255-279 (QRTIHLHFLHNKTKPCDSILRMQKS) lie on the Extracellular side of the membrane. Asparagine 265 carries an N-linked (GlcNAc...) asparagine glycan. Residues 280-300 (VVITLSLAASNCCFDPLLYFF) traverse the membrane as a helical segment. Residues 301–340 (SGGNFRRRLSTIRKYSLSSMTYIPKKKTSLPQKGKDICKE) lie on the Cytoplasmic side of the membrane.

This sequence belongs to the G-protein coupled receptor 1 family.

It localises to the cell membrane. In terms of biological role, receptor for cysteinyl leukotrienes mediating bronchoconstriction of individuals with and without asthma. Stimulation by LTD4 results in the contraction and proliferation of smooth muscle, edema, eosinophil migration and damage to the mucus layer in the lung. This response is mediated via a G-protein that activates a phosphatidylinositol-calcium second messenger system. In Cavia porcellus (Guinea pig), this protein is Cysteinyl leukotriene receptor 1 (CYSLTR1).